A 202-amino-acid chain; its full sequence is Histone H1 (202 aa).

Disordered stretches follow at residues 1–50 (MTAI…VTHP) and 114–202 (YKLS…KIAV). Over residues 18–38 (EASKVKEQAPATDKKPRAPKE) the composition is skewed to basic and acidic residues. Residues 48-118 (THPPYFQMIK…KIKASYKLSE (71 aa)) enclose the H15 domain. Basic residues predominate over residues 160–202 (KAKATPKPKKVGAKRTRKSTPAKAKQPKSIKSPAAKRAKKIAV).

This sequence belongs to the histone H1/H5 family.

The protein localises to the nucleus. The protein resides in the chromosome. Histones H1 are necessary for the condensation of nucleosome chains into higher-order structures. This Solanum pennellii (Tomato) protein is Histone H1.